The chain runs to 402 residues: Pentalenic acid synthase (402 aa).

The disordered stretch occupies residues 1–28 (MTEPGTSVSAPVAFPQDRTCPYDPPTAY). Cys-351 provides a ligand contact to heme.

It belongs to the cytochrome P450 family. Heme is required as a cofactor.

The enzyme catalyses 1-deoxypentalenate + reduced 2[4Fe-4S]-[ferredoxin] + O2 + 2 H(+) = pentalenate + oxidized 2[4Fe-4S]-[ferredoxin] + H2O. It participates in antibiotic biosynthesis; neopentalenolactone biosynthesis. Functionally, catalyzes the conversion of 1-deoxypentalenic acid to pentalenic acid in the biosynthesis of neopentalenolactone antibiotic. This chain is Pentalenic acid synthase (cyp28), found in Streptomyces avermitilis (strain ATCC 31267 / DSM 46492 / JCM 5070 / NBRC 14893 / NCIMB 12804 / NRRL 8165 / MA-4680).